Here is a 787-residue protein sequence, read N- to C-terminus: MDSPSNSIQNLQQEAQGSSSAQLADHDHDRVSMAMPLQTDQSVSVSQSSDNLRRSRRVPKPRTSIYDEYEEELKERANKPKRKRPAPPKKKAPSTQNSKSNDKVEKKKTTSIAKDGKPTLKTNDKKVAPKPKPAHEQVEPALIPSNWTSVIPLLTSDFKNQYSVISRLKNPNMKPVPYAGDIIKLMAFINKFSSFFHSDLQNLSFQDFEVGLDLYPGDPNGSAAGIVKGPEDTSLLLYPDFMAIKDIVYCQDKMNLLFLSLLDLTFTENFDGKSAKKKGPLTTWENLKSSSKKVFSNPLYRLRLVAREWGYPREWRQQLPSDQDISKPKTALFEQDEQTPVVDPSHPEILTPNIYTWNANEPLPLESNPLYNREMDKNGILALKPMDRVVLLRALTDWCASHSSAIHDEIYKLTHGKKDPVFGIQTQQVPRYTIEGVDNTINQFKKLCSLIQSRYEIRSKKKHFVKQLKEGKKPDLSRKLEILKEIKAELKNAVKSEKDELLFSLYDKWVPLFEGELPDQPLANPFSERLYKLRLQEFFLGRVPHIGDFYMPRLHSYGDSLEMSTFTDLRNLQALLSKFKNNEYNAFTLFENDGQSMSAQFKLFYHDTPSLAHDVARGRNTSGKVYWYELCHDSATLLEFLEFLDYKIVKPQDEKKEGNEKEKEALNNEAHILEQKSTTDNNPSINTNPLPKDAKYNTARKKLQILKEFLSDYYFILRQFEQMKVQFADMKPGKRQLRRIQRQTVNYNTEYDSEEYVDDEEDDEADIYDDNDNDSSFDDGRVKRQRT.

Positions 1–22 (MDSPSNSIQNLQQEAQGSSSAQ) are enriched in polar residues. Disordered regions lie at residues 1 to 137 (MDSP…AHEQ), 672 to 693 (ILEQKSTTDNNPSINTNPLPKD), and 749 to 787 (TEYDSEEYVDDEEDDEADIYDDNDNDSSFDDGRVKRQRT). Low complexity predominate over residues 40–50 (DQSVSVSQSSD). Residues 79 to 92 (KPKRKRPAPPKKKA) show a composition bias toward basic residues. Residues 100–137 (SNDKVEKKKTTSIAKDGKPTLKTNDKKVAPKPKPAHEQ) are compositionally biased toward basic and acidic residues. Residues 675-689 (QKSTTDNNPSINTNP) show a composition bias toward polar residues. The segment covering 751–777 (YDSEEYVDDEEDDEADIYDDNDNDSSF) has biased composition (acidic residues). Residues 778–787 (DDGRVKRQRT) show a composition bias toward basic and acidic residues.

Component of the ISW1A complex, which at least consists of ISW1 and IOC3.

The protein localises to the nucleus. Its function is as follows. Functions as a component of the ISW1A complex, which acts in remodeling the chromatin by catalyzing an ATP-dependent alteration in the structure of nucleosomal DNA. The ISW1A complex represses gene expression at initiation through specific positioning of a promoter proximal dinucleosome. This chain is ISWI one complex protein 3 (IOC3), found in Saccharomyces cerevisiae (strain ATCC 204508 / S288c) (Baker's yeast).